The sequence spans 712 residues: Cadherin-13 (712 aa).

Residues 1–22 (MQHKTQLTLSFLLSQVLLLACA) form the signal peptide. Positions 23-138 (EDLECTPGFQ…GNLGIPRQKR (116 aa)) are excised as a propeptide. Residue N86 is glycosylated (N-linked (GlcNAc...) asparagine). 5 Cadherin domains span residues 143 to 245 (TPIL…RPMF), 246 to 363 (KEGP…PPEF), 364 to 477 (TKKE…GPVF), 478 to 585 (HPNP…VPSL), and 586 to 680 (YPTL…LQVC). Residues N382, N500, N530, N638, and N671 are each glycosylated (N-linked (GlcNAc...) asparagine). A lipid anchor (GPI-anchor amidated aspartate) is attached at D693. The propeptide at 694–712 (ALHISMTLILLSLFSLFCL) is removed in mature form.

In terms of assembly, by contrast to classical cadherins, homodimerization in trans is not mediated by cadherin EC1 domain strand-swapping, but instead through a homophilic adhesive interface which joins two elongated EC1-EC2 domains through a region near their Ca2+-binding sites to form a tetrahedral, X-like shape. In terms of tissue distribution, neural tissues. Also found in muscles; kidney and retina.

Its subcellular location is the cell membrane. The protein resides in the cytoplasm. In terms of biological role, cadherins are calcium-dependent cell adhesion proteins. They preferentially interact with themselves in a homophilic manner in connecting cells; cadherins may thus contribute to the sorting of heterogeneous cell types. May act as a negative regulator of neural cell growth. This Gallus gallus (Chicken) protein is Cadherin-13 (CDH13).